The primary structure comprises 199 residues: UPF0316 protein LA_0606 (199 aa).

Transmembrane regions (helical) follow at residues 47–67 and 73–93; these read IAAS…TQVI and VFCY…GMIL.

This sequence belongs to the UPF0316 family.

It localises to the cell membrane. This chain is UPF0316 protein LA_0606, found in Leptospira interrogans serogroup Icterohaemorrhagiae serovar Lai (strain 56601).